A 256-amino-acid chain; its full sequence is 1-(5-phosphoribosyl)-5-[(5-phosphoribosylamino)methylideneamino] imidazole-4-carboxamide isomerase (256 aa).

D8 serves as the catalytic Proton acceptor. D130 (proton donor) is an active-site residue.

This sequence belongs to the HisA/HisF family.

Its subcellular location is the cytoplasm. It catalyses the reaction 1-(5-phospho-beta-D-ribosyl)-5-[(5-phospho-beta-D-ribosylamino)methylideneamino]imidazole-4-carboxamide = 5-[(5-phospho-1-deoxy-D-ribulos-1-ylimino)methylamino]-1-(5-phospho-beta-D-ribosyl)imidazole-4-carboxamide. Its pathway is amino-acid biosynthesis; L-histidine biosynthesis; L-histidine from 5-phospho-alpha-D-ribose 1-diphosphate: step 4/9. The chain is 1-(5-phosphoribosyl)-5-[(5-phosphoribosylamino)methylideneamino] imidazole-4-carboxamide isomerase from Pelodictyon phaeoclathratiforme (strain DSM 5477 / BU-1).